The primary structure comprises 462 residues: Calcitonin gene-related peptide type 1 receptor (462 aa).

The N-terminal stretch at 1–22 is a signal peptide; that stretch reads MEKKYILYFLFLLPFFMILVIA. Residues 23 to 140 are Extracellular-facing; the sequence is ETEEENPDDL…NTHEKVQTAL (118 aa). Disulfide bonds link Cys49–Cys75, Cys66–Cys106, and Cys89–Cys128. 3 N-linked (GlcNAc...) asparagine glycosylation sites follow: Asn67, Asn119, and Asn124. Residues 141 to 165 form a helical membrane-spanning segment; it reads NLFYLTIIGHGLSIASLLISLGIFF. Topologically, residues 166-176 are cytoplasmic; sequence YFKSLSCQRIT. Residues 177 to 199 form a helical membrane-spanning segment; sequence LHKNLFFSFVCNSIVTIIHLTAV. Over 200–210 the chain is Extracellular; sequence ANNQALVATNP. A helical transmembrane segment spans residues 211–239; that stretch reads VSCKVFQFIHLYLMGCNYFWMLCEGIYLH. Over 240 to 253 the chain is Cytoplasmic; sequence TLIVVAVFAEKQHL. The helical transmembrane segment at 254–274 threads the bilayer; the sequence is MWYYFLGWGFPLIPACIHAVA. Residues 275 to 290 lie on the Extracellular side of the membrane; the sequence is RRLYYNDNCWISSDTH. Residues 289 to 290 are required for RAMP3 interaction; sequence TH. Residues 291 to 315 form a helical membrane-spanning segment; the sequence is LLYIIHGPICAALLVNLFFLLNIVR. Residues 316–330 are Cytoplasmic-facing; it reads VLITKLKVTHQAESN. A helical membrane pass occupies residues 331 to 352; that stretch reads LYMKAVRATLILVPLLGIEFVL. Over 353-367 the chain is Extracellular; it reads IPWRPEGKIAEEVYD. A helical membrane pass occupies residues 368 to 388; that stretch reads YIMHILVHYQGLLVSTIYCFF. The Cytoplasmic portion of the chain corresponds to 389–462; it reads NGEVQAILRR…IVIKPEKLYD (74 aa). A phosphoserine mark is found at Ser421 and Ser446.

This sequence belongs to the G-protein coupled receptor 2 family. As to quaternary structure, heterodimer of CALCRL and RAMP1; the receptor complex functions as CGRP receptor. Heterodimer of CALCRL and RAMP2 or CALCRL and RAMP3; the complexes function as adrenomedullin receptor. Detected in lung and coronary artery.

It is found in the cell membrane. G protein-coupled receptor which specificity is determined by its interaction with receptor-activity-modifying proteins (RAMPs). Together with RAMP1, form the receptor complex for calcitonin-gene-related peptides CALCA/CGRP1 and CALCB/CGRP2. Together with RAMP2 or RAMP3, function as receptor complexes for adrenomedullin (ADM and ADM2). Ligand binding causes a conformation change that triggers signaling via guanine nucleotide-binding proteins (G proteins) and modulates the activity of downstream effectors. Activates cAMP-dependent pathway. This Sus scrofa (Pig) protein is Calcitonin gene-related peptide type 1 receptor (CALCRL).